Consider the following 491-residue polypeptide: Probable G-protein coupled receptor Mth-like 7 (491 aa).

A signal peptide spans 1–22 (MRLPWVIFCTVLLLIFTNNSNA). N-linked (GlcNAc...) asparagine glycans are attached at residues N18 and N42. At 23–167 (DIPGCNYYDT…EEVSIQIFNK (145 aa)) the chain is on the extracellular side. Disulfide bonds link C27–C80, C82–C87, and C92–C103. A helical transmembrane segment spans residues 168-188 (CGLIVWFQDGKFWVTVDLFME). Topologically, residues 189 to 222 (KQDYCLYRHNFDSDFPKSMWIIRHRCTSHISPGS) are cytoplasmic. The helical transmembrane segment at 223–243 (LEILIITMICFVLTIAVYLYI) threads the bilayer. Residues 244–252 (KKLRNVTGK) are Extracellular-facing. Residue N248 is glycosylated (N-linked (GlcNAc...) asparagine). Residues 253–273 (CIVCCIVSRFIQCLIMILDHL) form a helical membrane-spanning segment. Over 274-325 (NLLNGICSPAGYSSHFFRMASNLWLSVISYHTWKVLTSLNRVDPNYRFLRYN) the chain is Cytoplasmic. The chain crosses the membrane as a helical span at residues 326–346 (AFVWSTAAIMTGSIYIVNQIW). At 347 to 372 (ENDPSKWNWLPLVGFIRCSVKDWHPS) the chain is on the extracellular side. Residues 373-393 (VWIYISGPSLALSTFNVAMFA) traverse the membrane as a helical segment. Residues 394-434 (LTAIYIRKVKGGINKFTNEEEGRINCINFDSQTYLQFLRLS) lie on the Cytoplasmic side of the membrane. The chain crosses the membrane as a helical span at residues 435 to 455 (IVMGLTWIFNVIPYSARLHIF). At 456–458 (WEW) the chain is on the extracellular side. A helical transmembrane segment spans residues 459–479 (VGIISEYFHSAFGIVLFVLLV). At 480-491 (LKRSTWTLMMDS) the chain is on the cytoplasmic side.

It belongs to the G-protein coupled receptor 2 family. Mth subfamily.

The protein localises to the cell membrane. The sequence is that of Probable G-protein coupled receptor Mth-like 7 (mthl7) from Drosophila melanogaster (Fruit fly).